The following is a 327-amino-acid chain: Protein hunchback (327 aa).

3 C2H2-type zinc fingers span residues 1–5 (HMRNH), 11–33 (FQCS…LKSH), and 39–63 (YRCA…KYQH). Disordered regions lie at residues 91–121 (KQKP…HPIF), 143–170 (PPNN…MSPP), and 182–290 (ERPL…EVAS). 2 stretches are compositionally biased toward basic and acidic residues: residues 205 to 216 (THREMPTEHGDD) and 265 to 276 (LQHEDEKMRDAD). 2 consecutive C2H2-type zinc fingers follow at residues 297 to 319 (YTCQ…MGFH) and 325 to 327 (FMC).

Belongs to the hunchback C2H2-type zinc-finger protein family.

Its subcellular location is the nucleus. Functionally, gap class segmentation protein that controls development of head structures. In Manduca sexta (Tobacco hawkmoth), this protein is Protein hunchback (hb).